We begin with the raw amino-acid sequence, 59 residues long: Ribosome biogenesis protein Nop10 (59 aa).

The protein belongs to the NOP10 family.

Functionally, involved in ribosome biogenesis; more specifically in 18S rRNA pseudouridylation and in cleavage of pre-rRNA. The protein is Ribosome biogenesis protein Nop10 of Thermococcus sibiricus (strain DSM 12597 / MM 739).